Reading from the N-terminus, the 493-residue chain is Amino acid permease 2 (493 aa).

The Cytoplasmic portion of the chain corresponds to 1–49 (MGETAAANNHRHHHHHGHQVFDVASHDFVPPQPAFKCFDDDGRLKRTGT). The next 2 membrane-spanning stretches (helical) occupy residues 50–70 (VWTASAHIITAVIGSGVLSLA) and 71–91 (WAIAQLGWIAGPAVMLLFSLV). Over 92–138 (TLYSSTLLSDCYRTGDAVSGKRNYTYMDAVRSILGGFKFKICGLIQY) the chain is Cytoplasmic. Residues 139–159 (LNLFGIAIGYTIAASISMMAI) form a helical membrane-spanning segment. The Extracellular portion of the chain corresponds to 160-175 (KRSNCFHKSGGKDPCH). The chain crosses the membrane as a helical span at residues 176–196 (MSSNPYMIVFGVAEILLSQVP). Topologically, residues 197 to 200 (DFDQ) are cytoplasmic. The helical transmembrane segment at 201–221 (IWWISIVAAVMSFTYSAIGLA) threads the bilayer. Residues 222-253 (LGIVQVAANGVFKGSLTGISIGTVTQTQKIWR) lie on the Extracellular side of the membrane. A helical transmembrane segment spans residues 254-274 (TFQALGDIAFAYSYSVVLIEI). Over 275-293 (QDTVRSPPAESKTMKKATK) the chain is Cytoplasmic. Residues 294-314 (ISIAVTTIFYMLCGSMGYAAF) form a helical membrane-spanning segment. At 315 to 340 (GDAAPGNLLTGFGFYNPFWLLDIANA) the chain is on the extracellular side. A helical transmembrane segment spans residues 341–361 (AIVVHLVGAYQVFAQPIFAFI). At 362–396 (EKSVAERYPDNDFLSKEFEIRIPGFKSPYKVNVFR) the chain is on the cytoplasmic side. Residues 397–417 (MVYRSGFVVTTTVISMLMPFF) traverse the membrane as a helical segment. Residues 418-419 (ND) are Extracellular-facing. The chain crosses the membrane as a helical span at residues 420 to 440 (VVGILGALGFWPLTVYFPVEM). Residues 441–458 (YIKQRKVEKWSTRWVCLQ) lie on the Cytoplasmic side of the membrane. Residues 459–479 (MLSVACLVISVVAGVGSIAGV) form a helical membrane-spanning segment. Topologically, residues 480–493 (MLDLKVYKPFKSTY) are extracellular.

The protein belongs to the amino acid/polyamine transporter 2 family. Amino acid/auxin permease (AAAP) (TC 2.A.18.2) subfamily. In terms of tissue distribution, highly expressed in developing pods. Found in the vascular strands of siliques, cotyledons, leaves and roots, in the inner phloem of stems, and in the funiculi. Lower levels of expression in flowers. Not expressed in seeds.

It is found in the cell membrane. Inhibited by diethylpyrocarbonate (DEPC). Amino acid-proton symporter. Stereospecific transporter with a broad specificity for histidine, arginine, glutamate and neutral amino acids, favoring small amino acids such as alanine, asparagine and glutamine. Also accepts large aromatic residues such as phenlalanine or tyrosine. Has a much higher affinity for basic amino acids as compared with AAP1. May function in xylem-to-phloem transfer and in uptake of amino acids assimilated in the green silique tissue. The polypeptide is Amino acid permease 2 (AAP2) (Arabidopsis thaliana (Mouse-ear cress)).